The primary structure comprises 195 residues: METINNVFDSVISLQSAIPDNSQIINQIFPNVYVLIAHVISLIFLLLLVIRLAWKPTKSYIEARTKEIQRKMEAAEKAQLESEKNLHISRIKLLESKNTAAEIIENAELDAEKTKKKIEAVALNKASQIESEGYSKIKKQELELEKRKNLEVSKLALETAGIFLSKKIDEEENKKIIDDIVNDLTAKLESSSKEK.

Residues 28–48 (IFPNVYVLIAHVISLIFLLLL) traverse the membrane as a helical segment.

Belongs to the ATPase B chain family. As to quaternary structure, F-type ATPases have 2 components, F(1) - the catalytic core - and F(0) - the membrane proton channel. F(1) has five subunits: alpha(3), beta(3), gamma(1), delta(1), epsilon(1). F(0) has three main subunits: a(1), b(2) and c(10-14). The alpha and beta chains form an alternating ring which encloses part of the gamma chain. F(1) is attached to F(0) by a central stalk formed by the gamma and epsilon chains, while a peripheral stalk is formed by the delta and b chains.

Its subcellular location is the cell membrane. Its function is as follows. F(1)F(0) ATP synthase produces ATP from ADP in the presence of a proton or sodium gradient. F-type ATPases consist of two structural domains, F(1) containing the extramembraneous catalytic core and F(0) containing the membrane proton channel, linked together by a central stalk and a peripheral stalk. During catalysis, ATP synthesis in the catalytic domain of F(1) is coupled via a rotary mechanism of the central stalk subunits to proton translocation. Component of the F(0) channel, it forms part of the peripheral stalk, linking F(1) to F(0). The polypeptide is ATP synthase subunit b (Malacoplasma penetrans (strain HF-2) (Mycoplasma penetrans)).